The chain runs to 159 residues: Putative phosphatidylinositol-3-phosphatase (159 aa).

A signal peptide spans 1–16 (MKRPSFLPVLIGTGFG). The next 4 membrane-spanning stretches (helical) occupy residues 30–50 (LLAS…ALLW), 54–74 (ALVV…ESCW), 104–124 (WYVI…PLGV), and 134–154 (VGVM…IAVA).

It is found in the membrane. It catalyses the reaction a 1,2-diacyl-sn-glycero-3-phospho-(1D-myo-inositol-3-phosphate) + H2O = a 1,2-diacyl-sn-glycero-3-phospho-(1D-myo-inositol) + phosphate. Its function is as follows. May be responsible for the conversion of phosphatidylinositol phosphate diacylglycerol (PIP-DAG) to phosphatidylinositol diacylglycerol (PI-DAG), making it a key enzyme in the inositol glycerophospholipid biosynthesis pathway. The polypeptide is Putative phosphatidylinositol-3-phosphatase (Bacteroides thetaiotaomicron (strain ATCC 29148 / DSM 2079 / JCM 5827 / CCUG 10774 / NCTC 10582 / VPI-5482 / E50)).